Here is a 208-residue protein sequence, read N- to C-terminus: Putative 3-methyladenine DNA glycosylase (208 aa).

The protein belongs to the DNA glycosylase MPG family.

The sequence is that of Putative 3-methyladenine DNA glycosylase from Prosthecochloris aestuarii (strain DSM 271 / SK 413).